A 240-amino-acid chain; its full sequence is Orotidine 5'-phosphate decarboxylase (240 aa).

Substrate-binding positions include aspartate 19, lysine 41, aspartate 68–threonine 77, threonine 123, arginine 184, glutamine 193, glycine 213, and arginine 214. Lysine 70 serves as the catalytic Proton donor.

This sequence belongs to the OMP decarboxylase family. Type 1 subfamily. Homodimer.

The enzyme catalyses orotidine 5'-phosphate + H(+) = UMP + CO2. Its pathway is pyrimidine metabolism; UMP biosynthesis via de novo pathway; UMP from orotate: step 2/2. Its function is as follows. Catalyzes the decarboxylation of orotidine 5'-monophosphate (OMP) to uridine 5'-monophosphate (UMP). The chain is Orotidine 5'-phosphate decarboxylase from Nitrobacter winogradskyi (strain ATCC 25391 / DSM 10237 / CIP 104748 / NCIMB 11846 / Nb-255).